Consider the following 513-residue polypeptide: Probable cytosol aminopeptidase (513 aa).

2 residues coordinate Mn(2+): lysine 277 and aspartate 282. Lysine 289 is an active-site residue. Mn(2+) contacts are provided by aspartate 300, aspartate 359, and glutamate 361. Arginine 363 is a catalytic residue.

It belongs to the peptidase M17 family. It depends on Mn(2+) as a cofactor.

Its subcellular location is the cytoplasm. It carries out the reaction Release of an N-terminal amino acid, Xaa-|-Yaa-, in which Xaa is preferably Leu, but may be other amino acids including Pro although not Arg or Lys, and Yaa may be Pro. Amino acid amides and methyl esters are also readily hydrolyzed, but rates on arylamides are exceedingly low.. The enzyme catalyses Release of an N-terminal amino acid, preferentially leucine, but not glutamic or aspartic acids.. Its function is as follows. Presumably involved in the processing and regular turnover of intracellular proteins. Catalyzes the removal of unsubstituted N-terminal amino acids from various peptides. This is Probable cytosol aminopeptidase from Mycobacterium sp. (strain KMS).